Here is a 372-residue protein sequence, read N- to C-terminus: MSPVFLPSGETYDQEHLDDNRVLGYNPLVPAALVQQEIPVSETSRKVITDSRKEIQAILNKQDDRIIVVVGPCSIHDPKLAMDYAKLLKPKADELQDALCVVMRCYLEKPRTTIGWKGLVNDPNLDGSFAINKGIRMARQMYCDVTNFGIPLASEMLDNISPQFFADLLSFGAIGARTTESQLHRELASALSFPVGFKNGTDGTVGVAIDAIGATAHPHTMLGVTKQGLAAITMTRGNKDTFIILRGGKKGPNYDAEHVAAVRKDLEKANLPPRIMIDCSHGNSSKNHLNQPKVSKSIAEQIRNGDSSIVGVMIESHINEGRQDAPIRPGVKDTLKYGVSITDACVSWEQTAPMLDDLAEAVRARRQNQKSN.

The protein belongs to the class-I DAHP synthase family.

The protein localises to the cytoplasm. It is found in the nucleus. It carries out the reaction D-erythrose 4-phosphate + phosphoenolpyruvate + H2O = 7-phospho-2-dehydro-3-deoxy-D-arabino-heptonate + phosphate. It functions in the pathway metabolic intermediate biosynthesis; chorismate biosynthesis; chorismate from D-erythrose 4-phosphate and phosphoenolpyruvate: step 1/7. Its function is as follows. Stereospecific condensation of phosphoenolpyruvate (PEP) and D-erythrose-4-phosphate (E4P) giving rise to 3-deoxy-D-arabino-heptulosonate-7-phosphate (DAHP). The sequence is that of Phospho-2-dehydro-3-deoxyheptonate aldolase, tyrosine-inhibited (aro4) from Schizosaccharomyces pombe (strain 972 / ATCC 24843) (Fission yeast).